Consider the following 257-residue polypeptide: Triosephosphate isomerase (257 aa).

Substrate is bound by residues N11 and K13. The active-site Electrophile is the H96. E170 functions as the Proton acceptor in the catalytic mechanism.

The protein belongs to the triosephosphate isomerase family. In terms of assembly, homodimer.

The protein localises to the cytoplasm. It catalyses the reaction D-glyceraldehyde 3-phosphate = dihydroxyacetone phosphate. It carries out the reaction dihydroxyacetone phosphate = methylglyoxal + phosphate. The protein operates within carbohydrate biosynthesis; gluconeogenesis. Its pathway is carbohydrate degradation; glycolysis; D-glyceraldehyde 3-phosphate from glycerone phosphate: step 1/1. Functionally, triosephosphate isomerase is an extremely efficient metabolic enzyme that catalyzes the interconversion between dihydroxyacetone phosphate (DHAP) and D-glyceraldehyde-3-phosphate (G3P) in glycolysis and gluconeogenesis. In terms of biological role, it is also responsible for the non-negligible production of methylglyoxal a reactive cytotoxic side-product that modifies and can alter proteins, DNA and lipids. This Giardia intestinalis (Giardia lamblia) protein is Triosephosphate isomerase.